A 64-amino-acid polypeptide reads, in one-letter code: Alpha-conotoxin-like Lp1.7 (64 aa).

The first 21 residues, 1–21 (MGMRMMFTMFLLVVLTTTVVS), serve as a signal peptide directing secretion. The propeptide occupies 22-41 (FNSDRESNHENRRTSNQITR). 2 disulfide bridges follow: Cys-47–Cys-53 and Cys-48–Cys-61. Residues 49–51 (DDP) are lacks the Ser-Xaa-Pro motif that is crucial for potent interaction with nAChR.

Belongs to the conotoxin A superfamily. Expressed by the venom duct.

The protein resides in the secreted. Its function is as follows. Alpha-conotoxins act on postsynaptic membranes, they bind to the nicotinic acetylcholine receptors (nAChR) and thus inhibit them. Has possibly a distinct nAChR binding mode from other alpha-conotoxins, due to a different three residue motif (lacks the Ser-Xaa-Pro motif). This Conus leopardus (Leopard cone) protein is Alpha-conotoxin-like Lp1.7.